A 950-amino-acid chain; its full sequence is MVYHWRGDLGSWRLLLLLLLLAAWKVGSGQLHYSVPEEAKHGTFVGRIAQDLGLELAELVPRLFRVASKRHRDLLEVNLQNGILFVNSRIDREELCGRSAECSIHLEVIVDRPLQVFHVDVEVKDVNDNPPVFRVKEQKLFVSESRMPDSRFPLEGASDADVGANSVLTYRLSFHDYFMLDVNSKNDENKLVELVLRKSLDREDAPAHDLFLTATDGGKPELTGTVQLLVTVLDVNDNAPNFEQSEYEVRIFENADNGTTVIKLNASDRDEGANGAISYSFNSLVETMVIDHFSIDRNTGEIVIRGNLDFEQENFYKIRIDATDKGHPPMAGHCTVLVRILDKNDNVPEIALTSLSLPVREDAQFGTVIALISVNDLDSGANGQVTCSLMPHVPFKLVSTFKNYYSLVLDSALDRESVSAYELVVTARDGGSPSLWATASLSVEVADVNDNAPAFAQPEYTVFVKENNPPGCHIFTVSARDADAQENALVSYSLVERRVGERSLSSYVSVHTESGKVYALQPLDHEELELLQFQVSARDAGVPPLGSNVTLQVFVLDENDNAPALLEPRVGGTGGSASELVPRSVGAGHVVAKVRAVDADSGYNAWLSYELQPAASSPRIPFRVGLYTGEISTTRVLDEADSPRHRLLVLVKDHGEPALTATATVLVSLVESGQAPKASSRQSAGVVGPEAALVDVNVYLIIAICAVSSLLVLTLLLYTALRCSALPTEGGCRAGKPTLVCSSAVGSWSYSQQQSQRVCSGEGPPKTDLMAFSPCLPPDLGSVDVGEERDLNVDHGLKPRQPNPDWRYSASLRAGMHSSVHLEEAGILRAGPGGPDQQWPTVSSATPEPEAGEVSPPVGAGVNSNSWTFKYGPGNPKQSGPGELPDKFIIPGSPAIISIRQEPANSQIDKSDFITFGKKEETKKKKKKKKGNKTQEKKEKGNSTTDNSDQ.

An N-terminal signal peptide occupies residues 1-29 (MVYHWRGDLGSWRLLLLLLLLAAWKVGSG). 6 Cadherin domains span residues 30 to 133 (QLHY…PPVF), 157 to 242 (ASDA…APNF), 243 to 350 (EQSE…VPEI), 351 to 455 (ALTS…APAF), 456 to 565 (AQPE…APAL), and 581 to 678 (VPRS…APKA). The Extracellular portion of the chain corresponds to 30-697 (QLHYSVPEEA…GPEAALVDVN (668 aa)). Residues asparagine 257 and asparagine 265 are each glycosylated (N-linked (GlcNAc...) asparagine). N-linked (GlcNAc...) asparagine glycosylation is present at asparagine 548. Residues 698 to 718 (VYLIIAICAVSSLLVLTLLLY) form a helical membrane-spanning segment. Residues 719–950 (TALRCSALPT…GNSTTDNSDQ (232 aa)) are Cytoplasmic-facing. PXXP repeat units lie at residues 774–777 (PCLP), 799–802 (PRQP), 832–835 (PGGP), 873–876 (PGNP), and 891–894 (PGSP). The 5 X 4 AA repeats of P-X-X-P stretch occupies residues 774–894 (PCLPPDLGSV…PDKFIIPGSP (121 aa)). Positions 831 to 950 (GPGGPDQQWP…GNSTTDNSDQ (120 aa)) are disordered. Positions 909 to 923 (DKSDFITFGKKEETK) are enriched in basic and acidic residues.

It localises to the cell membrane. Its function is as follows. Potential calcium-dependent cell-adhesion protein. May be involved in the establishment and maintenance of specific neuronal connections in the brain. The sequence is that of Protocadherin alpha-8 (PCDHA8) from Pan troglodytes (Chimpanzee).